The following is a 453-amino-acid chain: Glutamyl-tRNA(Gln) amidotransferase subunit A (453 aa).

Active-site charge relay system residues include K56 and S131. S155 functions as the Acyl-ester intermediate in the catalytic mechanism.

The protein belongs to the amidase family. GatA subfamily. In terms of assembly, heterotrimer of A, B and C subunits.

It catalyses the reaction L-glutamyl-tRNA(Gln) + L-glutamine + ATP + H2O = L-glutaminyl-tRNA(Gln) + L-glutamate + ADP + phosphate + H(+). Allows the formation of correctly charged Gln-tRNA(Gln) through the transamidation of misacylated Glu-tRNA(Gln) in organisms which lack glutaminyl-tRNA synthetase. The reaction takes place in the presence of glutamine and ATP through an activated gamma-phospho-Glu-tRNA(Gln). This Campylobacter fetus subsp. fetus (strain 82-40) protein is Glutamyl-tRNA(Gln) amidotransferase subunit A.